Reading from the N-terminus, the 448-residue chain is T-box transcription factor TBX19 (448 aa).

A DNA-binding region (T-box) is located at residues 45-218 (LEDAPLWQRF…YNPFAKAFLD (174 aa)).

It is found in the nucleus. Its function is as follows. Transcriptional regulator involved in developmental processes. Can activate POMC gene expression and repress the alpha glycoprotein subunit and thyroid-stimulating hormone beta promoters. In Homo sapiens (Human), this protein is T-box transcription factor TBX19.